Here is a 341-residue protein sequence, read N- to C-terminus: GTPase Obg (341 aa).

The Obg domain maps to 1-159 (MKFLDQAKIY…RTIWLRLKLI (159 aa)). The OBG-type G domain maps to 160-327 (ADAGLVGLPN…TLRQLARIID (168 aa)). Residues 166 to 173 (GLPNAGKS), 191 to 195 (FTTLH), 212 to 215 (DIPG), 279 to 282 (SQVD), and 308 to 310 (SAV) contribute to the GTP site. Residues S173 and T193 each coordinate Mg(2+).

This sequence belongs to the TRAFAC class OBG-HflX-like GTPase superfamily. OBG GTPase family. In terms of assembly, monomer. It depends on Mg(2+) as a cofactor.

The protein localises to the cytoplasm. Its function is as follows. An essential GTPase which binds GTP, GDP and possibly (p)ppGpp with moderate affinity, with high nucleotide exchange rates and a fairly low GTP hydrolysis rate. Plays a role in control of the cell cycle, stress response, ribosome biogenesis and in those bacteria that undergo differentiation, in morphogenesis control. The chain is GTPase Obg from Brucella abortus biovar 1 (strain 9-941).